The primary structure comprises 374 residues: Anhydro-N-acetylmuramic acid kinase (374 aa).

Residue 9 to 16 (GTSLDGID) participates in ATP binding.

Belongs to the anhydro-N-acetylmuramic acid kinase family.

The enzyme catalyses 1,6-anhydro-N-acetyl-beta-muramate + ATP + H2O = N-acetyl-D-muramate 6-phosphate + ADP + H(+). It participates in amino-sugar metabolism; 1,6-anhydro-N-acetylmuramate degradation. Its pathway is cell wall biogenesis; peptidoglycan recycling. Its function is as follows. Catalyzes the specific phosphorylation of 1,6-anhydro-N-acetylmuramic acid (anhMurNAc) with the simultaneous cleavage of the 1,6-anhydro ring, generating MurNAc-6-P. Is required for the utilization of anhMurNAc either imported from the medium or derived from its own cell wall murein, and thus plays a role in cell wall recycling. The chain is Anhydro-N-acetylmuramic acid kinase from Methylobacterium nodulans (strain LMG 21967 / CNCM I-2342 / ORS 2060).